A 236-amino-acid polypeptide reads, in one-letter code: Ribose-5-phosphate isomerase A (236 aa).

Residues 31-34, 84-87, and 97-100 contribute to the substrate site; these read TGST, DGAD, and KGGG. The Proton acceptor role is filled by Glu-106. Position 124 (Lys-124) interacts with substrate.

This sequence belongs to the ribose 5-phosphate isomerase family. Homodimer.

It carries out the reaction aldehydo-D-ribose 5-phosphate = D-ribulose 5-phosphate. The protein operates within carbohydrate degradation; pentose phosphate pathway; D-ribose 5-phosphate from D-ribulose 5-phosphate (non-oxidative stage): step 1/1. In terms of biological role, catalyzes the reversible conversion of ribose-5-phosphate to ribulose 5-phosphate. This Polynucleobacter necessarius subsp. necessarius (strain STIR1) protein is Ribose-5-phosphate isomerase A.